The following is a 213-amino-acid chain: Cytochrome b6 (213 aa).

Residues 30–50 (IFYCLGGLTLLAFLVQCVTGL) traverse the membrane as a helical segment. Cys33 is a heme c binding site. Heme b is bound by residues His84 and His98. The next 3 helical transmembrane spans lie at 88–108 (ANLM…TGSF), 114–134 (LNWL…FTGY), and 184–204 (LHVM…FIMI). Residues His185 and His200 each coordinate heme b.

This sequence belongs to the cytochrome b family. PetB subfamily. As to quaternary structure, the subunits of the cytochrome bc complex are a Rieske Fe-S protein (PetC), cytochrome b6 (PetB), subunit IV (PetD), and a diheme cytochrome c (PetX). Heme b is required as a cofactor. Requires heme c as cofactor.

It is found in the cell membrane. Its function is as follows. Component of the cytochrome bc complex which donates electrons to the photosynthetic reaction center. This Heliobacterium mobile (Heliobacillus mobilis) protein is Cytochrome b6.